The sequence spans 113 residues: Translation initiation factor IF-1, chloroplastic (113 aa).

The S1-like domain occupies 8–83; sequence REKKNPREAK…SKGRIIYRLP (76 aa). The tract at residues 86 to 113 is disordered; sequence DSKRIEDSKDSEDLKDSEDLKDTKDSKD.

It belongs to the IF-1 family. As to quaternary structure, component of the 30S ribosomal translation pre-initiation complex which assembles on the 30S ribosome in the order IF-2 and IF-3, IF-1 and N-formylmethionyl-tRNA(fMet); mRNA recruitment can occur at any time during PIC assembly.

The protein resides in the plastid. It is found in the chloroplast. One of the essential components for the initiation of protein synthesis. Stabilizes the binding of IF-2 and IF-3 on the 30S subunit to which N-formylmethionyl-tRNA(fMet) subsequently binds. Helps modulate mRNA selection, yielding the 30S pre-initiation complex (PIC). Upon addition of the 50S ribosomal subunit IF-1, IF-2 and IF-3 are released leaving the mature 70S translation initiation complex. This Hordeum vulgare (Barley) protein is Translation initiation factor IF-1, chloroplastic.